The primary structure comprises 306 residues: Phosphoadenosine phosphosulfate reductase (306 aa).

Disordered stretches follow at residues 1 to 30 (MPAKMHSNYPSDSETAELRDSTESGYVSGG) and 245 to 266 (YHSTSPVKENEDERSGRWKGQA).

Belongs to the PAPS reductase family. CysH subfamily.

It catalyses the reaction [thioredoxin]-disulfide + sulfite + adenosine 3',5'-bisphosphate + 2 H(+) = [thioredoxin]-dithiol + 3'-phosphoadenylyl sulfate. It participates in sulfur metabolism; hydrogen sulfide biosynthesis; sulfite from sulfate: step 3/3. The NADP dependent reduction of PAPS into sulfite involves thioredoxin which probably plays the role of a thiol carrier. In Emericella nidulans (strain FGSC A4 / ATCC 38163 / CBS 112.46 / NRRL 194 / M139) (Aspergillus nidulans), this protein is Phosphoadenosine phosphosulfate reductase (sA).